Here is a 436-residue protein sequence, read N- to C-terminus: 3-ketoacyl-CoA thiolase (436 aa).

Catalysis depends on C99, which acts as the Acyl-thioester intermediate. Catalysis depends on proton acceptor residues H392 and C422.

This sequence belongs to the thiolase-like superfamily. Thiolase family. As to quaternary structure, heterotetramer of two alpha chains (FadJ) and two beta chains (FadI).

The protein localises to the cytoplasm. It catalyses the reaction an acyl-CoA + acetyl-CoA = a 3-oxoacyl-CoA + CoA. The protein operates within lipid metabolism; fatty acid beta-oxidation. In terms of biological role, catalyzes the final step of fatty acid oxidation in which acetyl-CoA is released and the CoA ester of a fatty acid two carbons shorter is formed. This chain is 3-ketoacyl-CoA thiolase, found in Escherichia coli O6:H1 (strain CFT073 / ATCC 700928 / UPEC).